The primary structure comprises 428 residues: Enolase (428 aa).

A (2R)-2-phosphoglycerate-binding site is contributed by Q163. E205 acts as the Proton donor in catalysis. Residues D242, E285, and D312 each contribute to the Mg(2+) site. (2R)-2-phosphoglycerate is bound by residues K337, R366, S367, and K388. K337 (proton acceptor) is an active-site residue.

It belongs to the enolase family. The cofactor is Mg(2+).

It is found in the cytoplasm. The protein resides in the secreted. It localises to the cell surface. The enzyme catalyses (2R)-2-phosphoglycerate = phosphoenolpyruvate + H2O. It functions in the pathway carbohydrate degradation; glycolysis; pyruvate from D-glyceraldehyde 3-phosphate: step 4/5. Catalyzes the reversible conversion of 2-phosphoglycerate (2-PG) into phosphoenolpyruvate (PEP). It is essential for the degradation of carbohydrates via glycolysis. In Neisseria meningitidis serogroup C (strain 053442), this protein is Enolase.